The sequence spans 865 residues: Adenylate cyclase (865 aa).

The catalytic stretch occupies residues 1–540 (MYLYIETLKQ…DISSHFPIRL (540 aa)). A regulatory region spans residues 546–865 (KALYSPCEIR…FNDYQAVHHH (320 aa)).

It belongs to the adenylyl cyclase class-1 family.

It localises to the cytoplasm. The enzyme catalyses ATP = 3',5'-cyclic AMP + diphosphate. The chain is Adenylate cyclase (cya) from Proteus mirabilis.